The primary structure comprises 136 residues: Nuclear receptor 2C2-associated protein (136 aa).

The protein belongs to the NR2C2AP family.

Its subcellular location is the nucleus. Functionally, may act as a repressor of nr2c2-mediated transactivation by suppressing the binding between nr2c2 and its response element in target genes. The polypeptide is Nuclear receptor 2C2-associated protein (nr2c2ap) (Xenopus laevis (African clawed frog)).